Reading from the N-terminus, the 150-residue chain is Nucleoside diphosphate kinase (150 aa).

Residues K10, F58, R86, T92, R103, and N113 each contribute to the ATP site. H116 (pros-phosphohistidine intermediate) is an active-site residue.

This sequence belongs to the NDK family. Requires Mg(2+) as cofactor.

It is found in the cytoplasm. It carries out the reaction a 2'-deoxyribonucleoside 5'-diphosphate + ATP = a 2'-deoxyribonucleoside 5'-triphosphate + ADP. The enzyme catalyses a ribonucleoside 5'-diphosphate + ATP = a ribonucleoside 5'-triphosphate + ADP. In terms of biological role, major role in the synthesis of nucleoside triphosphates other than ATP. The ATP gamma phosphate is transferred to the NDP beta phosphate via a ping-pong mechanism, using a phosphorylated active-site intermediate. This chain is Nucleoside diphosphate kinase, found in Methanobrevibacter smithii (strain ATCC 35061 / DSM 861 / OCM 144 / PS).